A 162-amino-acid polypeptide reads, in one-letter code: 3-isopropylmalate dehydratase small subunit (162 aa).

It belongs to the LeuD family. LeuD type 2 subfamily. As to quaternary structure, heterodimer of LeuC and LeuD.

The catalysed reaction is (2R,3S)-3-isopropylmalate = (2S)-2-isopropylmalate. The protein operates within amino-acid biosynthesis; L-leucine biosynthesis; L-leucine from 3-methyl-2-oxobutanoate: step 2/4. In terms of biological role, catalyzes the isomerization between 2-isopropylmalate and 3-isopropylmalate, via the formation of 2-isopropylmaleate. The chain is 3-isopropylmalate dehydratase small subunit from Pyrobaculum neutrophilum (strain DSM 2338 / JCM 9278 / NBRC 100436 / V24Sta) (Thermoproteus neutrophilus).